Here is a 315-residue protein sequence, read N- to C-terminus: Olfactory receptor 3A1 (315 aa).

Residues 1 to 28 (MQPESGANGTVIAEFILLGLLEAPGLQP) lie on the Extracellular side of the membrane. N-linked (GlcNAc...) asparagine glycosylation is present at N8. The helical transmembrane segment at 29 to 52 (VVFVLFLFAYLVTVGGNLSILAAV) threads the bilayer. The Cytoplasmic portion of the chain corresponds to 53 to 60 (LVEPKLHS). Residues 61–82 (PMYFFLGNLSVLDVGCISVTVP) traverse the membrane as a helical segment. At 83-103 (SMLSRLLSRKRAVPCGACLTQ) the chain is on the extracellular side. A disulfide bridge connects residues C100 and C192. A helical transmembrane segment spans residues 104 to 123 (LFFFHLFVGVDCFLLTAMAY). Residues 124 to 143 (DRFLAICRPLTYSTRMSQTV) lie on the Cytoplasmic side of the membrane. The chain crosses the membrane as a helical span at residues 144–161 (QRMLVAASWACAFTNALT). Over 162–199 (HTVAMSTLNFCGPNEVNHFYCDLPQLFQLSCSSTQLNE) the chain is Extracellular. A helical membrane pass occupies residues 200–223 (LLLFAVGFIMAGTPMALIVISYIH). Topologically, residues 224–240 (VAAAVLRIRSVEGRKKA) are cytoplasmic. The chain crosses the membrane as a helical span at residues 241 to 264 (FSTCGSHLTVVAMFYGSGIFNYMR). Residues 265–275 (LGSTKLSDKDK) are Extracellular-facing. The helical transmembrane segment at 276–295 (AVGIFNTVINPMVNPIIYRF) threads the bilayer. Residues 296 to 315 (RNPEVQSAIWRMLTGRRSLA) are Cytoplasmic-facing.

Belongs to the G-protein coupled receptor 1 family.

It localises to the cell membrane. In terms of biological role, odorant receptor. This is Olfactory receptor 3A1 (OR3A1) from Pan troglodytes (Chimpanzee).